The following is a 379-amino-acid chain: Acetylajmalan esterase 1 (379 aa).

Positions 1–20 are cleaved as a signal peptide; that stretch reads MGFAPLLVFSLFVFAGTTKG. The active-site Nucleophile is Ser-34. N-linked (GlcNAc...) asparagine glycosylation is found at Asn-96, Asn-178, Asn-197, and Asn-291. Residues Asp-332 and His-335 contribute to the active site.

This sequence belongs to the 'GDSL' lipolytic enzyme family. In terms of tissue distribution, expressed in roots and leaves at low levels.

It carries out the reaction 17-O-acetylnorajmaline + H2O = norajmaline + acetate + H(+). The catalysed reaction is 17-O-acetylajmaline + H2O = ajmaline + acetate + H(+). Its pathway is alkaloid biosynthesis; ajmaline biosynthesis. Acetylesterase involved in the biosynthesis of ajmaline-type monoterpenoid indole alkaloids (MIAs) natural products, important plant-derived pharmaceuticals used in the therapy of heart disorders. Deacetylates 17-O-acetylnorajmaline to produce norajmaline. May also catalyze the conversion of 17-O-acetylajmaline to ajmaline. The sequence is that of Acetylajmalan esterase 1 from Rauvolfia serpentina (Serpentine wood).